The following is a 191-amino-acid chain: Lipid A acyltransferase PagP (191 aa).

A signal peptide spans 1–23; the sequence is MRLFYQRISLLISLCGFFSAAWA. Residues histidine 62, aspartate 105, and serine 106 contribute to the active site.

Belongs to the lipid A palmitoyltransferase family. In terms of assembly, homodimer.

It is found in the cell outer membrane. The enzyme catalyses a lipid A + a 1,2-diacyl-sn-glycero-3-phosphocholine = a hepta-acyl lipid A + a 2-acyl-sn-glycero-3-phosphocholine. The catalysed reaction is a lipid IVA + a 1,2-diacyl-sn-glycero-3-phosphocholine = a lipid IVB + a 2-acyl-sn-glycero-3-phosphocholine. It carries out the reaction a lipid IIA + a 1,2-diacyl-sn-glycero-3-phosphocholine = a lipid IIB + a 2-acyl-sn-glycero-3-phosphocholine. Transfers a fatty acid residue from the sn-1 position of a phospholipid to the N-linked hydroxyfatty acid chain on the proximal unit of lipid A or its precursors. This chain is Lipid A acyltransferase PagP, found in Sodalis glossinidius (strain morsitans).